Here is an 876-residue protein sequence, read N- to C-terminus: MSKSTAEIRQAFLDFFHSKGHQVVASSSLVPHNDPTLLFTNAGMNQFKDVFLGLDKRNYSRATTSQRCVRAGGKHNDLENVGYTARHHTFFEMLGNFSFGDYFKHDAIQFAWELLTSEKWFALPKERLWVTVYESDDEAYEIWEKEVGIPRERIIRIGDNKGAPYASDNFWQMGDTGPCGPCTEIFYDHGDHIWGGPPGSPEEDGDRYIEIWNIVFMQFNRQADGTMEPLPKPSVDTGMGLERIAAVLQHVNSNYDIDLFRTLIQAVAKVTGATDLSNKSLRVIADHIRSCAFLIADGVMPSNENRGYVLRRIIRRAVRHGNMLGAKETFFYKLVGPLIDVMGSAGEDLKRQQAQVEQVLKTEEEQFARTLERGLALLDEELAKLSGDTLDGETAFRLYDTYGFPVDLTADVCRERNIKVDEAGFEAAMEEQRRRAREASGFGADYNAMIRVDSASEFKGYDHLELNGKVTALFVDGKAVDAINAGQEAVVVLDQTPFYAESGGQVGDKGELKGANFSFAVEDTQKYGQAIGHIGKLAAGSLKVGDAVQADVDEARRARIRLNHSATHLMHAALRQVLGTHVSQKGSLVNDKVLRFDFSHNEAMKPEEIRAVEDLVNTQIRRNLPIETNIMDLEAAKAKGAMALFGEKYDERVRVLSMGDFSTELCGGTHASRTGDIGLFRIISESGTAAGVRRIEAVTGEGAIATVHADSDRLSEVAHLLKGDSNNLADKVRSVLERTRQLEKELQQLKEQAAAQESANLSSKAIDVNGVKLLVSELSGVEPKMLRTMVDDLKNQLGSTIIVLATVVEGKVSLIAGVSKDVTDRVKAGELIGMVAQQVGGKGGGRPDMAQAGGTDAAALPAALASVKGWVSAKLQ.

The segment at 2 to 461 (SKSTAEIRQA…VDSASEFKGY (460 aa)) is catalytic. K74 carries the N6-acetyllysine modification. The tract at residues 553–705 (DEARRARIRL…EAVTGEGAIA (153 aa)) is editing. Residues H564, H568, C666, and H670 each coordinate Zn(2+). The segment at 699 to 808 (TGEGAIATVH…STIIVLATVV (110 aa)) is important for oligomerization. The tract at residues 766 to 875 (IDVNGVKLLV…SVKGWVSAKL (110 aa)) is C-Ala domain.

It belongs to the class-II aminoacyl-tRNA synthetase family. In terms of assembly, homotetramer. It depends on Zn(2+) as a cofactor.

It localises to the cytoplasm. The enzyme catalyses tRNA(Ala) + L-alanine + ATP = L-alanyl-tRNA(Ala) + AMP + diphosphate. The catalysed reaction is (S)-lactate + ATP + H(+) = (S)-lactoyl-AMP + diphosphate. It catalyses the reaction (S)-lactoyl-AMP + L-lysyl-[protein] = N(6)-[(S)-lactoyl]-L-lysyl-[protein] + AMP + 2 H(+). Its activity is regulated as follows. Acetylation at Lys-74 decreases the alanylation activity for tRNA(Ala); a protein that is fully acetylated is inactive in vitro. Functionally, catalyzes the attachment of L-alanine to tRNA(Ala) in a two-step reaction: L-alanine is first activated by ATP to form Ala-AMP and then transferred to the acceptor end of tRNA(Ala). AlaRS also incorrectly activates the sterically smaller amino acid glycine as well as the sterically larger amino acid L-serine; generates 2-fold more mischarged Gly than Ser. These mischarged amino acids occur because the of inherent physicochemical limitations on discrimination between closely related amino acids (Ala, Gly and Ser) in the charging step. In presence of high levels of lactate, also acts as a protein lactyltransferase that mediates lactylation of lysine residues in target proteins. Edits mischarged Ser-tRNA(Ala) and Gly-tRNA(Ala) but not incorrectly charged Ser-tRNA(Thr). Dtd edits Gly-tRNA(Ala) 4-fold better than does AlaRS. Its function is as follows. Attaches Ala to transfer-messenger RNA (tmRNA, also known as 10Sa RNA, the product of the ssrA gene). tmRNA plays a major role in rescue of stalled ribosomes via trans-translation. The chain is Alanine--tRNA ligase (alaS) from Escherichia coli (strain K12).